Reading from the N-terminus, the 377-residue chain is Cytochrome b (377 aa).

4 consecutive transmembrane segments (helical) span residues 34-54 (FGFLLGMCLSIQIFTGLFLSM), 78-100 (WLLRVLHANGGSMFFICLYIHIA), 113-133 (TWMTGVVLLILVMATAFLGYV), and 179-199 (FFTLHFILPFVVLAMVAIHLL). H84 and H98 together coordinate heme b. Heme b contacts are provided by H183 and H197. H202 serves as a coordination point for a ubiquinone. 4 consecutive transmembrane segments (helical) span residues 225 to 245 (FTIKDLFGVVVMVWLLMILVL), 288 to 308 (KLGGVVALLASVVILIILPLY), 323 to 343 (MLFWGFISIFILLTWIGAQAI), and 352 to 372 (QILTSLYFFYFILSPLLSVLW).

It belongs to the cytochrome b family. In terms of assembly, the main subunits of complex b-c1 are: cytochrome b, cytochrome c1 and the Rieske protein. The cofactor is heme b.

The protein resides in the mitochondrion inner membrane. In terms of biological role, component of the ubiquinol-cytochrome c reductase complex (complex III or cytochrome b-c1 complex) that is part of the mitochondrial respiratory chain. The b-c1 complex mediates electron transfer from ubiquinol to cytochrome c. Contributes to the generation of a proton gradient across the mitochondrial membrane that is then used for ATP synthesis. The polypeptide is Cytochrome b (mt:Cyt-b) (Priapulus caudatus (Priapulid worm)).